An 852-amino-acid chain; its full sequence is GPI ethanolamine phosphate transferase 2 (852 aa).

2 N-linked (GlcNAc...) asparagine glycosylation sites follow: Asn191 and Asn420. The next 3 membrane-spanning stretches (helical) occupy residues 458-478 (LIRLYVGLSISGFAISLTFFP), 486-506 (FAPAGMFLGFSILSYSTMMFA), and 516-536 (FWYWISMGWVVYLHVKYAGHF). Asn576 carries N-linked (GlcNAc...) asparagine glycosylation. Transmembrane regions (helical) follow at residues 632 to 652 (LLYHARMVLCGISLLMIYSLY), 676 to 696 (TLTLFLLMQSKVTNIPAFLVF), 714 to 734 (TITSLLMQYVTFYAFGGSNAI), 750 to 770 (SVFIVGALTFISNWAAPIWWV), 787 to 807 (AHVTILTLHMATILMSVMAAC), and 824 to 844 (YLYTIAWAMINHIVVNVLGEI).

It belongs to the PIGG/PIGN/PIGO family. PIGG subfamily.

Its subcellular location is the endoplasmic reticulum membrane. The protein operates within glycolipid biosynthesis; glycosylphosphatidylinositol-anchor biosynthesis. Ethanolamine phosphate transferase involved in glycosylphosphatidylinositol-anchor biosynthesis. Transfers ethanolamine phosphate to the GPI second mannose. The polypeptide is GPI ethanolamine phosphate transferase 2 (las21) (Aspergillus oryzae (strain ATCC 42149 / RIB 40) (Yellow koji mold)).